We begin with the raw amino-acid sequence, 614 residues long: Zinc finger and SCAN domain-containing protein 2 (614 aa).

Disordered regions lie at residues Met1 to Gln25, Ala42 to Gln73, and Asn162 to Pro200. Residues Ala69 to Leu127 form the SCAN box domain. C2H2-type zinc fingers lie at residues Tyr222–His244, Tyr250–His272, Tyr278–His300, Phe306–His328, Tyr334–His356, Tyr362–His384, Tyr390–His412, Tyr418–His440, Tyr446–His468, Tyr474–His496, Tyr502–His524, Tyr530–His552, Tyr558–His580, and Tyr586–His608.

This sequence belongs to the krueppel C2H2-type zinc-finger protein family. In the adult, predominantly found in spermatids. Also present in the embryo.

It localises to the nucleus. In terms of biological role, may be involved in transcriptional regulation during the post-meiotic stages of spermatogenesis. In Mus musculus (Mouse), this protein is Zinc finger and SCAN domain-containing protein 2 (Zscan2).